The chain runs to 155 residues: 6,7-dimethyl-8-ribityllumazine synthase (155 aa).

Residues Phe-24, 58–60 (AFE), and 82–84 (VII) each bind 5-amino-6-(D-ribitylamino)uracil. 87 to 88 (ST) provides a ligand contact to (2S)-2-hydroxy-3-oxobutyl phosphate. His-90 acts as the Proton donor in catalysis. Phe-115 provides a ligand contact to 5-amino-6-(D-ribitylamino)uracil. A (2S)-2-hydroxy-3-oxobutyl phosphate-binding site is contributed by Arg-129.

This sequence belongs to the DMRL synthase family.

It catalyses the reaction (2S)-2-hydroxy-3-oxobutyl phosphate + 5-amino-6-(D-ribitylamino)uracil = 6,7-dimethyl-8-(1-D-ribityl)lumazine + phosphate + 2 H2O + H(+). The protein operates within cofactor biosynthesis; riboflavin biosynthesis; riboflavin from 2-hydroxy-3-oxobutyl phosphate and 5-amino-6-(D-ribitylamino)uracil: step 1/2. Its function is as follows. Catalyzes the formation of 6,7-dimethyl-8-ribityllumazine by condensation of 5-amino-6-(D-ribitylamino)uracil with 3,4-dihydroxy-2-butanone 4-phosphate. This is the penultimate step in the biosynthesis of riboflavin. The protein is 6,7-dimethyl-8-ribityllumazine synthase of Chlorobaculum tepidum (strain ATCC 49652 / DSM 12025 / NBRC 103806 / TLS) (Chlorobium tepidum).